The following is a 645-amino-acid chain: Aspartate--tRNA ligase, mitochondrial (645 aa).

A mitochondrion-targeting transit peptide spans 1-47; it reads MYFPSWLSQLYRGLSRPIRRTTQPIWGSLYRSLLQSSQRRIPEFSSF. Phosphothreonine is present on Thr-219. Phosphoserine is present on Ser-242. The segment at 244-247 is aspartate; sequence QQFK. An L-aspartate-binding site is contributed by Arg-266. 266-268 contacts ATP; it reads RDE. Lys-382 carries the N6-acetyllysine modification. Glu-535 provides a ligand contact to ATP. Arg-542 is an L-aspartate binding site. Residue 584–587 coordinates ATP; the sequence is GLDR.

This sequence belongs to the class-II aminoacyl-tRNA synthetase family. Type 1 subfamily. In terms of assembly, homodimer.

The protein resides in the mitochondrion matrix. The protein localises to the mitochondrion membrane. The enzyme catalyses tRNA(Asp) + L-aspartate + ATP = L-aspartyl-tRNA(Asp) + AMP + diphosphate. Catalyzes the attachment of aspartate to tRNA(Asp) in a two-step reaction: aspartate is first activated by ATP to form Asp-AMP and then transferred to the acceptor end of tRNA(Asp). The protein is Aspartate--tRNA ligase, mitochondrial (DARS2) of Homo sapiens (Human).